Reading from the N-terminus, the 105-residue chain is Met repressor (105 aa).

It belongs to the MetJ family. In terms of assembly, homodimer.

It is found in the cytoplasm. Its function is as follows. This regulatory protein, when combined with SAM (S-adenosylmethionine) represses the expression of the methionine regulon and of enzymes involved in SAM synthesis. This is Met repressor from Pasteurella multocida (strain Pm70).